The following is a 437-amino-acid chain: Serine hydroxymethyltransferase (437 aa).

Residues Leu-130 and 134–136 (GHL) each bind (6S)-5,6,7,8-tetrahydrofolate. Lys-239 carries the N6-(pyridoxal phosphate)lysine modification.

It belongs to the SHMT family. Homodimer. Requires pyridoxal 5'-phosphate as cofactor.

Its subcellular location is the cytoplasm. The catalysed reaction is (6R)-5,10-methylene-5,6,7,8-tetrahydrofolate + glycine + H2O = (6S)-5,6,7,8-tetrahydrofolate + L-serine. The protein operates within one-carbon metabolism; tetrahydrofolate interconversion. It participates in amino-acid biosynthesis; glycine biosynthesis; glycine from L-serine: step 1/1. In terms of biological role, catalyzes the reversible interconversion of serine and glycine with tetrahydrofolate (THF) serving as the one-carbon carrier. This reaction serves as the major source of one-carbon groups required for the biosynthesis of purines, thymidylate, methionine, and other important biomolecules. Also exhibits THF-independent aldolase activity toward beta-hydroxyamino acids, producing glycine and aldehydes, via a retro-aldol mechanism. The sequence is that of Serine hydroxymethyltransferase from Bartonella quintana (strain Toulouse) (Rochalimaea quintana).